A 151-amino-acid chain; its full sequence is Large ribosomal subunit protein bL9 (151 aa).

Belongs to the bacterial ribosomal protein bL9 family.

In terms of biological role, binds to the 23S rRNA. The chain is Large ribosomal subunit protein bL9 from Nitrosospira multiformis (strain ATCC 25196 / NCIMB 11849 / C 71).